The following is a 118-amino-acid chain: Large ribosomal subunit protein bL20 (118 aa).

This sequence belongs to the bacterial ribosomal protein bL20 family.

Binds directly to 23S ribosomal RNA and is necessary for the in vitro assembly process of the 50S ribosomal subunit. It is not involved in the protein synthesizing functions of that subunit. This is Large ribosomal subunit protein bL20 from Thermus thermophilus (strain ATCC BAA-163 / DSM 7039 / HB27).